A 208-amino-acid polypeptide reads, in one-letter code: Small ribosomal subunit protein uS4 (208 aa).

The region spanning 95–157 is the S4 RNA-binding domain; that stretch reads RRIDNIVYRA…DSLKKLVRSN (63 aa).

Belongs to the universal ribosomal protein uS4 family. As to quaternary structure, part of the 30S ribosomal subunit. Contacts protein S5. The interaction surface between S4 and S5 is involved in control of translational fidelity.

In terms of biological role, one of the primary rRNA binding proteins, it binds directly to 16S rRNA where it nucleates assembly of the body of the 30S subunit. Its function is as follows. With S5 and S12 plays an important role in translational accuracy. The polypeptide is Small ribosomal subunit protein uS4 (Borrelia duttonii (strain Ly)).